The following is a 569-amino-acid chain: Retrotransposon Gag-like protein 5 (569 aa).

Disordered stretches follow at residues 115 to 151 (DGPA…LERP) and 323 to 506 (RNII…PSRR). Positions 117–146 (PADPPLLPIPPPPALPPPASKEPPPQPPLA) are enriched in pro residues. Residues 334 to 350 (NEEESEDEEYYSEDEDQ) show a composition bias toward acidic residues. A compositionally biased stretch (basic residues) spans 353–367 (RRHRLHSKDQRKRMR). Composition is skewed to basic and acidic residues over residues 372 to 392 (EMKE…KKEE) and 401 to 415 (MKQK…NKNE). 2 stretches are compositionally biased toward acidic residues: residues 416–429 (EEGE…EDED) and 443–469 (GTEE…ELME). Positions 476 to 485 (HASSQTSGPT) are enriched in polar residues.

In Homo sapiens (Human), this protein is Retrotransposon Gag-like protein 5.